Consider the following 194-residue polypeptide: Small ribosomal subunit protein uS7 (194 aa).

The protein belongs to the universal ribosomal protein uS7 family. Part of the 30S ribosomal subunit.

Functionally, one of the primary rRNA binding proteins, it binds directly to 16S rRNA where it nucleates assembly of the head domain of the 30S subunit. Is located at the subunit interface close to the decoding center. In Methanospirillum hungatei JF-1 (strain ATCC 27890 / DSM 864 / NBRC 100397 / JF-1), this protein is Small ribosomal subunit protein uS7.